Consider the following 142-residue polypeptide: Large ribosomal subunit protein uL11 (142 aa).

Belongs to the universal ribosomal protein uL11 family. In terms of assembly, part of the ribosomal stalk of the 50S ribosomal subunit. Interacts with L10 and the large rRNA to form the base of the stalk. L10 forms an elongated spine to which L12 dimers bind in a sequential fashion forming a multimeric L10(L12)X complex. Post-translationally, one or more lysine residues are methylated.

Its function is as follows. Forms part of the ribosomal stalk which helps the ribosome interact with GTP-bound translation factors. In Brucella abortus (strain S19), this protein is Large ribosomal subunit protein uL11.